A 319-amino-acid chain; its full sequence is Aspartate carbamoyltransferase catalytic subunit (319 aa).

Residues Arg-57 and Thr-58 each contribute to the carbamoyl phosphate site. An L-aspartate-binding site is contributed by Lys-85. Carbamoyl phosphate contacts are provided by Arg-107, His-140, and Gln-143. Arg-173 and Arg-227 together coordinate L-aspartate. Residues Gly-268 and Pro-269 each coordinate carbamoyl phosphate.

It belongs to the aspartate/ornithine carbamoyltransferase superfamily. ATCase family. Heterododecamer (2C3:3R2) of six catalytic PyrB chains organized as two trimers (C3), and six regulatory PyrI chains organized as three dimers (R2).

The enzyme catalyses carbamoyl phosphate + L-aspartate = N-carbamoyl-L-aspartate + phosphate + H(+). It participates in pyrimidine metabolism; UMP biosynthesis via de novo pathway; (S)-dihydroorotate from bicarbonate: step 2/3. In terms of biological role, catalyzes the condensation of carbamoyl phosphate and aspartate to form carbamoyl aspartate and inorganic phosphate, the committed step in the de novo pyrimidine nucleotide biosynthesis pathway. This chain is Aspartate carbamoyltransferase catalytic subunit, found in Mycobacterium tuberculosis (strain ATCC 25177 / H37Ra).